A 460-amino-acid chain; its full sequence is Tol-Pal system protein TolB (460 aa).

The signal sequence occupies residues 1–22; the sequence is MTIFQKSFILLIIWNFSLFAFS.

It belongs to the TolB family. As to quaternary structure, the Tol-Pal system is composed of five core proteins: the inner membrane proteins TolA, TolQ and TolR, the periplasmic protein TolB and the outer membrane protein Pal. They form a network linking the inner and outer membranes and the peptidoglycan layer.

It localises to the periplasm. Functionally, part of the Tol-Pal system, which plays a role in outer membrane invagination during cell division and is important for maintaining outer membrane integrity. TolB occupies a key intermediary position in the Tol-Pal system because it communicates directly with both membrane-embedded components, Pal in the outer membrane and TolA in the inner membrane. The chain is Tol-Pal system protein TolB from Blochmanniella floridana.